Consider the following 143-residue polypeptide: Chorion class A protein Ld5 (143 aa).

An N-terminal signal peptide occupies residues 1-21; that stretch reads MNSFALLLVCIQACLVQSVFS.

Belongs to the chorion protein family.

Its function is as follows. This protein is one of many from the eggshell of the gypsy moth. This Lymantria dispar (Gypsy moth) protein is Chorion class A protein Ld5.